The sequence spans 309 residues: Porphobilinogen deaminase (309 aa).

Cys-241 bears the S-(dipyrrolylmethanemethyl)cysteine mark.

This sequence belongs to the HMBS family. Monomer. Requires dipyrromethane as cofactor.

The catalysed reaction is 4 porphobilinogen + H2O = hydroxymethylbilane + 4 NH4(+). It functions in the pathway porphyrin-containing compound metabolism; protoporphyrin-IX biosynthesis; coproporphyrinogen-III from 5-aminolevulinate: step 2/4. Tetrapolymerization of the monopyrrole PBG into the hydroxymethylbilane pre-uroporphyrinogen in several discrete steps. This chain is Porphobilinogen deaminase, found in Bacillus cereus (strain AH820).